Reading from the N-terminus, the 329-residue chain is Glycerol-3-phosphate dehydrogenase [NAD(P)+] (329 aa).

NADPH-binding residues include Trp11, Arg30, and Lys103. Sn-glycerol 3-phosphate-binding residues include Lys103, Gly132, and Ser134. Residue Ala136 participates in NADPH binding. Sn-glycerol 3-phosphate-binding residues include Lys187, Asp240, Ser250, Arg251, and Asn252. The active-site Proton acceptor is the Lys187. Residue Arg251 participates in NADPH binding. NADPH-binding residues include Val275 and Glu277.

Belongs to the NAD-dependent glycerol-3-phosphate dehydrogenase family.

It localises to the cytoplasm. The catalysed reaction is sn-glycerol 3-phosphate + NAD(+) = dihydroxyacetone phosphate + NADH + H(+). The enzyme catalyses sn-glycerol 3-phosphate + NADP(+) = dihydroxyacetone phosphate + NADPH + H(+). It participates in membrane lipid metabolism; glycerophospholipid metabolism. Catalyzes the reduction of the glycolytic intermediate dihydroxyacetone phosphate (DHAP) to sn-glycerol 3-phosphate (G3P), the key precursor for phospholipid synthesis. The protein is Glycerol-3-phosphate dehydrogenase [NAD(P)+] of Methylobacillus flagellatus (strain ATCC 51484 / DSM 6875 / VKM B-1610 / KT).